Consider the following 702-residue polypeptide: Ribosomal RNA large subunit methyltransferase K/L (702 aa).

In terms of domain architecture, THUMP spans 43-154 (LVYQSLMWSR…KETASIALDL (112 aa)).

Belongs to the methyltransferase superfamily. RlmKL family.

The protein localises to the cytoplasm. The catalysed reaction is guanosine(2445) in 23S rRNA + S-adenosyl-L-methionine = N(2)-methylguanosine(2445) in 23S rRNA + S-adenosyl-L-homocysteine + H(+). It carries out the reaction guanosine(2069) in 23S rRNA + S-adenosyl-L-methionine = N(2)-methylguanosine(2069) in 23S rRNA + S-adenosyl-L-homocysteine + H(+). In terms of biological role, specifically methylates the guanine in position 2445 (m2G2445) and the guanine in position 2069 (m7G2069) of 23S rRNA. This chain is Ribosomal RNA large subunit methyltransferase K/L, found in Escherichia coli (strain K12 / DH10B).